A 33-amino-acid polypeptide reads, in one-letter code: Photosystem II reaction center protein Psb30 (33 aa).

A helical transmembrane segment spans residues 5 to 25; sequence VIAQLTVLALIVISGPLVIAL.

It belongs to the Psb30/Ycf12 family. As to quaternary structure, PSII is composed of 1 copy each of membrane proteins PsbA, PsbB, PsbC, PsbD, PsbE, PsbF, PsbH, PsbI, PsbJ, PsbK, PsbL, PsbM, PsbT, PsbX, PsbY, PsbZ, Psb30/Ycf12, peripheral proteins of the oxygen-evolving complex and a large number of cofactors. It forms dimeric complexes.

It is found in the plastid. The protein localises to the chloroplast thylakoid membrane. A core subunit of photosystem II (PSII), probably helps stabilize the reaction center. The polypeptide is Photosystem II reaction center protein Psb30 (Huperzia lucidula (Shining clubmoss)).